Here is a 121-residue protein sequence, read N- to C-terminus: Mu-hexatoxin-Mg1a (121 aa).

An N-terminal signal peptide occupies residues 1-20 (MMTLSPFLLLLIAAVVIGNA). The propeptide occupies 21–80 (SEGEVKNEFEERLKDEFKDPSRSEVAEVILLRELEVLEETLFGKEMTSDTEENRNSREKR). Disulfide bonds link cysteine 81–cysteine 95, cysteine 88–cysteine 102, and cysteine 94–cysteine 116. Residue lysine 120 is modified to Lysine amide.

Belongs to the neurotoxin 14 (magi-1) family. 09 (magi-1) subfamily. As to expression, expressed by the venom gland.

The protein localises to the secreted. Functionally, insecticidal neurotoxin. Shows competition for site 3 of insect voltage-gated sodium channels (Nav). Induces flaccid paralysis when injected into lepidopteran larvae. Is not toxic to mice when injected intracranially at 20 pmol/g. The sequence is that of Mu-hexatoxin-Mg1a from Macrothele gigas (Japanese funnel web spider).